Consider the following 296-residue polypeptide: Transmembrane protein 156 (296 aa).

Over 1 to 4 (MTKT) the chain is Cytoplasmic. The chain crosses the membrane as a helical span at residues 5–25 (ALLKLFVAIVITFILILPEYF). Residues 26–211 (KTPKERTLEL…EMDIKNITCS (186 aa)) are Extracellular-facing. N-linked (GlcNAc...) asparagine glycans are attached at residues Asn45 and Asn156. A helical membrane pass occupies residues 212 to 232 (MKITWYILVLLVFIFLIILTI). The Cytoplasmic segment spans residues 233-296 (RKILEGQRRV…QEVLPPIPEL (64 aa)).

The protein resides in the membrane. The chain is Transmembrane protein 156 (TMEM156) from Homo sapiens (Human).